Consider the following 280-residue polypeptide: MDDQRDLISNHEQLPILGQRARAPESNCNRGVLYTSVSVLVALLLAGQATTAYFLYQQQGRLDKLTVTSQNLQLENLRMKLPKSAKPVSPMRMATPLLMRPLSMDNMLQAPVKNVTKYGNMTQDHVMHLLTKSGPVNYPQLKGSFPENLKHLKNSMNGLDWKVFESWMKQWLLFEMSKNSLEEKQPTQTPPKVLTKCQEEVSHIPDVHPGAFRPKCDENGNYMPLQCHGSTGYCWCVFPNGTEVPHTKSRGRHNCSEPLDMEDPSSGLGVTKQDMGQMFL.

The Cytoplasmic portion of the chain corresponds to 1–30; that stretch reads MDDQRDLISNHEQLPILGQRARAPESNCNR. The residue at position 9 (Ser-9) is a Phosphoserine. Residues 31-56 traverse the membrane as a helical; Signal-anchor for type II membrane protein segment; that stretch reads GVLYTSVSVLVALLLAGQATTAYFLY. The Extracellular portion of the chain corresponds to 57 to 280; sequence QQQGRLDKLT…TKQDMGQMFL (224 aa). Asn-114 and Asn-120 each carry an N-linked (GlcNAc...) asparagine glycan. The Thyroglobulin type-1 domain occupies 194–255; the sequence is LTKCQEEVSH…HTKSRGRHNC (62 aa). 3 disulfides stabilise this stretch: Cys-197–Cys-216, Cys-227–Cys-234, and Cys-236–Cys-255. The segment at 246 to 268 is disordered; that stretch reads HTKSRGRHNCSEPLDMEDPSSGL. The O-linked (Xyl...) (chondroitin sulfate) serine glycan is linked to Ser-266.

As to quaternary structure, nonamer composed of three alpha/beta/gamma heterotrimers. Interacts with CD44; this complex is essential for the MIF-induced signaling cascade that results in B cell survival. In terms of assembly, interacts with the mature form of CTSL; the complex survive in neutral pH environment.

It localises to the late endosome. It is found in the lysosome. Its subcellular location is the cell membrane. The protein localises to the endoplasmic reticulum membrane. The protein resides in the golgi apparatus. It localises to the trans-Golgi network. It is found in the endosome. Its subcellular location is the secreted. Plays a critical role in MHC class II antigen processing by stabilizing peptide-free class II alpha/beta heterodimers in a complex soon after their synthesis and directing transport of the complex from the endoplasmic reticulum to compartments where peptide loading of class II takes place. Enhance also the stimulation of T-cell responses through interaction with CD44. Functionally, binds to the peptide-binding site of MHC class II alpha/beta heterodimers forming an alpha-beta-CLIP complex, thereby preventing the loading of antigenic peptides to the MHC class II complex until its release by HLA-DM in the endosome. In terms of biological role, stabilizes the conformation of mature CTSL by binding to its active site and serving as a chaperone to help maintain a pool of mature enzyme in endocytic compartments and extracellular space of antigen-presenting cells (APCs). This chain is H-2 class II histocompatibility antigen gamma chain, found in Rattus norvegicus (Rat).